Reading from the N-terminus, the 341-residue chain is NADH-ubiquinone oxidoreductase chain 2 (341 aa).

9 helical membrane passes run 8-28 (IFLIMLIFGTLVTISSNSWLG), 61-81 (FLTQAFASSILLFAIIMLMFL), 95-115 (ILILSTLLLKSGAAPFHFWFP), 145-165 (FIYNFFMISIILSMLIGSLGG), 174-191 (LMAFSSINHLGWMLLAMM), 195-215 (MLWMTYFLMYSLLSFSIVLMF), 238-258 (LLIFLNLLSLGGLPPFLGFLP), 272-292 (LFILTISVCLTLITLYFYLRL), and 321-341 (LIFNFISIGGLVMISMIYIIM).

The protein belongs to the complex I subunit 2 family.

It localises to the mitochondrion inner membrane. It carries out the reaction a ubiquinone + NADH + 5 H(+)(in) = a ubiquinol + NAD(+) + 4 H(+)(out). Functionally, core subunit of the mitochondrial membrane respiratory chain NADH dehydrogenase (Complex I) that is believed to belong to the minimal assembly required for catalysis. Complex I functions in the transfer of electrons from NADH to the respiratory chain. The immediate electron acceptor for the enzyme is believed to be ubiquinone. The chain is NADH-ubiquinone oxidoreductase chain 2 (mt:ND2) from Anopheles gambiae (African malaria mosquito).